The following is a 557-amino-acid chain: Inositol-3-phosphate synthase 1 (557 aa).

21 residues coordinate NAD(+): G67, G68, N69, N70, D141, S177, V178, Q188, R191, T228, A229, N230, T231, G278, S279, D303, S306, N337, N338, D339, and K352. S279 bears the Phosphoserine mark. S357 carries the post-translational modification Phosphoserine. Residues G390, D391, D419, and S420 each contribute to the NAD(+) site. Residues 514–557 form a disordered region; sequence GIKPEEVKATSPLPCKKESTPATNGCTGDANGHTQAPTPELSTA. The residue at position 524 (S524) is a Phosphoserine. Residues 533 to 557 show a composition bias toward polar residues; that stretch reads TPATNGCTGDANGHTQAPTPELSTA.

It belongs to the myo-inositol 1-phosphate synthase family. Homotrimer. Requires NAD(+) as cofactor. Phosphorylation at Ser-524 does not appear to affect enzyme activity, and is detected in brain and testis. In terms of tissue distribution, expressed in testis, brain and epididymis (at protein level). Moderately expressed in brain, lung, liver, and kidney. Low expression in heart and spleen. Very low expression in skeletal muscle. As to expression, expressed in testis, spleen, heart, brainstem, hippocampus, cerebellum, cortex and amygdala. Absent or very lowly expressed in intestine, lung and muscle. Expressed in intestine, lung, liver, muscle, testis, spleen, brainstem, hippocampus, cerebellum, cortex and amygdala. Absent or lowly expressed in heart and kidney. In terms of tissue distribution, expressed in intestine (at protein level).

It localises to the cytoplasm. It carries out the reaction D-glucose 6-phosphate = 1D-myo-inositol 3-phosphate. Its pathway is polyol metabolism; myo-inositol biosynthesis; myo-inositol from D-glucose 6-phosphate: step 1/2. Its activity is regulated as follows. Inhibited by 2-deoxyglucitol 6-phosphate (dgtolP) and 2-deoxy-D-glucose 6-phosphate. Inhibited by copper, mercury, cadmium, zinc and copper ions. Activated by potassium and ammonium ions. Functionally, key enzyme in myo-inositol biosynthesis pathway that catalyzes the conversion of glucose 6-phosphate to 1-myo-inositol 1-phosphate in a NAD-dependent manner. Rate-limiting enzyme in the synthesis of all inositol-containing compounds. Its function is as follows. Key enzyme in myo-inositol biosynthesis pathway that catalyzes the conversion of glucose 6-phosphate to 1-myo-inositol 1-phosphate in a NAD-dependent manner. In terms of biological role, competitively inhibits the function of isoform 1, presumably by competing for NAD cofactor. In Rattus norvegicus (Rat), this protein is Inositol-3-phosphate synthase 1 (Isyna1).